A 506-amino-acid polypeptide reads, in one-letter code: Light-independent protochlorophyllide reductase subunit B (506 aa).

Asp-36 serves as a coordination point for [4Fe-4S] cluster. Asp-279 functions as the Proton donor in the catalytic mechanism. Residue 414 to 415 coordinates substrate; it reads GL.

This sequence belongs to the ChlB/BchB/BchZ family. In terms of assembly, protochlorophyllide reductase is composed of three subunits; BchL, BchN and BchB. Forms a heterotetramer of two BchB and two BchN subunits. The cofactor is [4Fe-4S] cluster.

The enzyme catalyses chlorophyllide a + oxidized 2[4Fe-4S]-[ferredoxin] + 2 ADP + 2 phosphate = protochlorophyllide a + reduced 2[4Fe-4S]-[ferredoxin] + 2 ATP + 2 H2O. The protein operates within porphyrin-containing compound metabolism; bacteriochlorophyll biosynthesis (light-independent). Component of the dark-operative protochlorophyllide reductase (DPOR) that uses Mg-ATP and reduced ferredoxin to reduce ring D of protochlorophyllide (Pchlide) to form chlorophyllide a (Chlide). This reaction is light-independent. The NB-protein (BchN-BchB) is the catalytic component of the complex. This Methylobacterium sp. (strain 4-46) protein is Light-independent protochlorophyllide reductase subunit B.